A 327-amino-acid polypeptide reads, in one-letter code: S-adenosylmethionine/S-adenosylhomocysteine transporter (327 aa).

10 helical membrane passes run 22–42 (CDMAIFLIFLNAFIWSSSFAL), 53–73 (LFVTGSRMVLAGVVLFGLLLC), 85–105 (IMPIVLLSVIGFYLTNVLEFI), 114–134 (TACFIYGFSPFTAAFCSYVQL), 143–163 (LGGLSLGLVSYLVYLLFGGSE), 165–185 (VAEWGWQLGLPELLLIAATCL), 202–222 (SLSMTAINAYAMVIAGVLSLI), 240–260 (LFLQAIGALVIFSNLICYNLF), 271–291 (FLSFCNLVMPLFASFFGWLLL), and 294–314 (SFPPGLLFAVGFMVLGCRLIY). Residues 34–157 (FIWSSSFALS…LGLVSYLVYL (124 aa)) enclose the EamA 1 domain. An EamA 2 domain is found at 189-313 (GWTLLRKLGR…GFMVLGCRLI (125 aa)).

The protein belongs to the drug/metabolite transporter (DMT) superfamily. 10 TMS drug/metabolite exporter (DME) (TC 2.A.7.3) family.

It is found in the cell membrane. CCCP treatment reduces SAM intracellular uptake by 50%. Functionally, transports S-adenosylmethionine (SAM) and S-adenosylhomocysteine (SAH). Allows bacteria to acquire SAM from the eukaryotic host cell and to likely remove the toxic by-product SAH. The sequence is that of S-adenosylmethionine/S-adenosylhomocysteine transporter from Chlamydia trachomatis serovar L2 (strain ATCC VR-902B / DSM 19102 / 434/Bu).